The chain runs to 548 residues: T-complex protein 1 subunit theta (548 aa).

Ala2 bears the N-acetylalanine mark. Position 23 is a phosphoserine (Ser23). At Tyr30 the chain carries Phosphotyrosine. Residues Tyr47 and Gly48 each coordinate ADP. Asp99 contacts Mg(2+). ADP contacts are provided by Gly100, Thr101, Asn102, and Phe103. ATP is bound by residues Gly100, Thr101, and Asn102. A Phosphoserine modification is found at Ser162. Positions 169, 170, and 171 each coordinate ADP. Positions 170 and 171 each coordinate ATP. Residue Ser213 is modified to Phosphoserine. Glycyl lysine isopeptide (Lys-Gly) (interchain with G-Cter in SUMO2) cross-links involve residues Lys224, Lys254, and Lys260. A phosphoserine mark is found at Ser269 and Ser317. N6-acetyllysine occurs at positions 318 and 400. Residue Gly412 coordinates ADP. Gly412 contributes to the ATP binding site. Residue Lys459 forms a Glycyl lysine isopeptide (Lys-Gly) (interchain with G-Cter in SUMO1) linkage. The residue at position 466 (Lys466) is an N6-acetyllysine. Asp499 contributes to the ADP binding site. Residues Asp499 and Lys504 each coordinate ATP. Tyr505 is modified (phosphotyrosine). The interval 529–548 (PAGGPKPPSGKKDWDDDQND) is disordered. Residue Lys534 forms a Glycyl lysine isopeptide (Lys-Gly) (interchain with G-Cter in SUMO2) linkage. Position 537 is a phosphoserine (Ser537). Residue Lys539 forms a Glycyl lysine isopeptide (Lys-Gly) (interchain with G-Cter in SUMO2) linkage.

Belongs to the TCP-1 chaperonin family. As to quaternary structure, component of the chaperonin-containing T-complex (TRiC), a hexadecamer composed of two identical back-to-back stacked rings enclosing a protein folding chamber. Each ring is made up of eight different subunits: TCP1/CCT1, CCT2, CCT3, CCT4, CCT5, CCT6A/CCT6, CCT7, CCT8. Interacts with PACRG. Interacts with DNAAF4. Interacts with synaptic plasticity regulator PANTS.

It is found in the cytoplasm. The protein resides in the cytoskeleton. Its subcellular location is the microtubule organizing center. It localises to the centrosome. The protein localises to the cilium basal body. The enzyme catalyses ATP + H2O = ADP + phosphate + H(+). Its function is as follows. Component of the chaperonin-containing T-complex (TRiC), a molecular chaperone complex that assists the folding of actin, tubulin and other proteins upon ATP hydrolysis. The TRiC complex mediates the folding of WRAP53/TCAB1, thereby regulating telomere maintenance. As part of the TRiC complex may play a role in the assembly of BBSome, a complex involved in ciliogenesis regulating transports vesicles to the cilia. In Macaca fascicularis (Crab-eating macaque), this protein is T-complex protein 1 subunit theta (CCT8).